The primary structure comprises 216 residues: Trimethylamine corrinoid protein 1 (216 aa).

The 92-residue stretch at 1–92 (MANKEEIIAK…EMEKRKSQTK (92 aa)) folds into the B12-binding N-terminal domain. One can recognise a B12-binding domain in the interval 94 to 216 (LGTIVIGTIE…VVSKVKAALL (123 aa)). His107 lines the methylcob(III)alamin pocket.

This sequence belongs to the methylamine corrinoid protein family. Can form a complex with MttB.

It functions in the pathway one-carbon metabolism; methanogenesis from trimethylamine. Its function is as follows. Acts probably as a methyl group carrier between MttB and either MtbA or MtaA. This is Trimethylamine corrinoid protein 1 (mttC1) from Methanosarcina mazei (strain ATCC BAA-159 / DSM 3647 / Goe1 / Go1 / JCM 11833 / OCM 88) (Methanosarcina frisia).